Consider the following 297-residue polypeptide: Formylmethanofuran--tetrahydromethanopterin formyltransferase-like protein (297 aa).

Belongs to the FTR family.

The chain is Formylmethanofuran--tetrahydromethanopterin formyltransferase-like protein (ehaS) from Methanothermobacter thermautotrophicus (strain ATCC 29096 / DSM 1053 / JCM 10044 / NBRC 100330 / Delta H) (Methanobacterium thermoautotrophicum).